The following is a 636-amino-acid chain: Leucine-rich repeat and fibronectin type-III domain-containing protein 4 (636 aa).

An N-terminal signal peptide occupies residues 1–16; that stretch reads MAPPLLLLLLASGAAA. One can recognise an LRRNT domain in the interval 17 to 48; sequence CPLPCVCQNLSESLSTLCAHRGLLFVPPNVDR. The Extracellular segment spans residues 17–518; the sequence is CPLPCVCQNL…LQAHVLGGTL (502 aa). N25 and N70 each carry an N-linked (GlcNAc...) asparagine glycan. LRR repeat units follow at residues 49-70, 73-94, 97-118, 121-142, 146-169, 170-191, and 194-215; these read RTVE…DFRN, GLVD…SFGD, SLRS…SLRG, NLQH…AFDD, SLED…GSMP, ALHT…VFAQ, and QLSR…PLFS. Positions 234 to 280 constitute an LRRCT domain; it reads NPLHCNCELLWLRRLARPDDLETCASPPTLAGRYFWAVPEGEFSCEP. The Ig-like domain maps to 281–367; sequence PLIARHTQRL…GEATARVELR (87 aa). A disulfide bond links C302 and C351. N324, N333, N376, and N440 each carry an N-linked (GlcNAc...) asparagine glycan. The Fibronectin type-III domain maps to 405–502; that stretch reads SEPAVQVTEV…GCAHFSTLPA (98 aa). A helical membrane pass occupies residues 519–539; the sequence is TVAVGGVLVAALLVFTVALLV. Residues 540 to 636 are Cytoplasmic-facing; that stretch reads RGRGAGNGRL…SAERLEESVV (97 aa). The disordered stretch occupies residues 556-585; the sequence is VQSQTNGGTSPMPKSHPPRSPPPRPQRSCS. The span at 569-580 shows a compositional bias: pro residues; that stretch reads KSHPPRSPPPRP. S585 and S627 each carry phosphoserine. The PDZ-binding motif lies at 633–636; that stretch reads ESVV.

It belongs to the LRFN family. As to quaternary structure, can form heteromeric complexes with LRFN1, LRFN2, LRFN3 and LRFN5. Unable to form homophilic interactions across cell junctions. Interacts with DLG1, DLG2 and DLG3. Also interacts with DLG4. Glycosylated. As to expression, expressed in brain and testis. In the brain, weak, but broad expression in the cerebral cortex and diencephalic nuclei. Also detected in other parts of the central nervous system, including the olfactory bulb, pons, cerebellum, and medulla oblongata, as well as in the peripheral nervous system, such as the ganglia of cranial nerves and the dorsal root ganglion during gestation.

Its subcellular location is the membrane. Its function is as follows. Promotes neurite outgrowth in hippocampal neurons. May play a role in redistributing DLG4 to the cell periphery. The polypeptide is Leucine-rich repeat and fibronectin type-III domain-containing protein 4 (Lrfn4) (Mus musculus (Mouse)).